Reading from the N-terminus, the 59-residue chain is MSQSRTLRQKSQKYQENIEKRGVASPKKKEDGLNINPYVLGFIIFVVVGSTLLQILKGQ.

The disordered stretch occupies residues 1-30; that stretch reads MSQSRTLRQKSQKYQENIEKRGVASPKKKE. The Cytoplasmic segment spans residues 1–34; it reads MSQSRTLRQKSQKYQENIEKRGVASPKKKEDGLN. Positions 16–30 are enriched in basic and acidic residues; the sequence is ENIEKRGVASPKKKE. Residues 35-55 form a helical; Anchor for type IV membrane protein membrane-spanning segment; that stretch reads INPYVLGFIIFVVVGSTLLQI. Residues 56–59 are Extracellular-facing; the sequence is LKGQ.

The protein belongs to the RAMP4 family.

The protein resides in the membrane. It is found in the endoplasmic reticulum membrane. May interact with target proteins during translocation into the lumen of the endoplasmic reticulum. May protect unfolded target proteins against degradation and facilitate correct glycosylation. The sequence is that of Probable stress-associated endoplasmic reticulum protein (serp) from Dictyostelium discoideum (Social amoeba).